Reading from the N-terminus, the 1673-residue chain is Protein-methionine sulfoxide oxidase mical3b (1673 aa).

The tract at residues 2-492 (WDGQSEMCQA…RHLIDTGEGP (491 aa)) is monooxygenase domain. FAD-binding positions include C96, 96–124 (CGLR…SRNN), E115, R117, R122, N124, and D396. Residues 512-618 (MARYSKLLSW…YLSQLHELLK (107 aa)) form the Calponin-homology (CH) domain. The segment at 647–714 (SKLGQSLSRK…PKASEGHSKV (68 aa)) is disordered. A compositionally biased stretch (basic and acidic residues) spans 661–671 (DKKEKEADSVG). Positions 791 to 853 (DVCYFCGRRV…KHHFSFRLAS (63 aa)) constitute an LIM zinc-binding domain. Over residues 882–892 (LSSLGSVGTAT) the composition is skewed to low complexity. 5 disordered regions span residues 882–901 (LSSL…SSTH), 918–938 (RIEL…LQEV), 951–1100 (SLQE…KRSE), 1159–1188 (QSAR…TDGD), and 1357–1393 (GPDA…RETG). The span at 973–992 (LVWKKGEELHARTNGERKLD) shows a compositional bias: basic and acidic residues. Acidic residues-rich tracts occupy residues 993 to 1002 (LEEELKEEEG) and 1010 to 1041 (EGEE…DPDI). Low complexity predominate over residues 1081–1094 (SDLTPDPSTTPESS). The span at 1159-1182 (QSARICDSSTQTHSVTDLQETSPL) shows a compositional bias: polar residues. 2 coiled-coil regions span residues 1475-1531 (EEEL…AVEK) and 1573-1638 (QEKN…VEQR). The bMERB domain maps to 1495 to 1661 (KQEELRRLHR…EKEEDSDLEA (167 aa)).

The protein belongs to the Mical family. FAD serves as cofactor.

Its subcellular location is the cytoplasm. The protein resides in the cytoskeleton. It is found in the nucleus. It catalyses the reaction L-methionyl-[F-actin] + NADPH + O2 + H(+) = L-methionyl-(R)-S-oxide-[F-actin] + NADP(+) + H2O. In terms of biological role, monooxygenase that promotes depolymerization of F-actin by mediating oxidation of specific methionine residues on actin. Acts by modifying actin subunits through the addition of oxygen to form methionine-sulfoxide, leading to promote actin filament severing and prevent repolymerization. Involved in exocytic vesicles tethering and fusion: the monooxygenase activity is required for this process. This is Protein-methionine sulfoxide oxidase mical3b (mical3b) from Danio rerio (Zebrafish).